The primary structure comprises 838 residues: Periplasmic nitrate reductase (838 aa).

The segment at residues 1 to 29 is a signal peptide (tat-type signal); that stretch reads MKVSRRAFIKQTAAAATASVAGVTLPAGA. Positions 41–97 constitute a 4Fe-4S Mo/W bis-MGD-type domain; it reads LKWSKAPCRFCGTGCGVEVAVKDNRVVATQGDPKAEVNRGLNCVKGYFLSKIMYGKD. [4Fe-4S] cluster contacts are provided by C48, C51, C55, and C83. Mo-bis(molybdopterin guanine dinucleotide) contacts are provided by residues K85, Q152, N177, C181, 214–221, 245–249, M382, Q386, N492, 518–519, K541, D568, and 728–737; these read WGSNMAEM, STFTH, SD, and TGRVLEHWHS. Substrate is bound at residue W804. Mo-bis(molybdopterin guanine dinucleotide) contacts are provided by N812 and K829.

Belongs to the prokaryotic molybdopterin-containing oxidoreductase family. NasA/NapA/NarB subfamily. Component of the periplasmic nitrate reductase NapAB complex composed of NapA and NapB. Requires [4Fe-4S] cluster as cofactor. Mo-bis(molybdopterin guanine dinucleotide) serves as cofactor. Predicted to be exported by the Tat system. The position of the signal peptide cleavage has not been experimentally proven.

The protein localises to the periplasm. The enzyme catalyses 2 Fe(II)-[cytochrome] + nitrate + 2 H(+) = 2 Fe(III)-[cytochrome] + nitrite + H2O. Functionally, catalytic subunit of the periplasmic nitrate reductase complex NapAB. Receives electrons from NapB and catalyzes the reduction of nitrate to nitrite. This is Periplasmic nitrate reductase from Ralstonia pickettii (strain 12J).